The chain runs to 251 residues: 3-deoxy-manno-octulosonate cytidylyltransferase (251 aa).

The protein belongs to the KdsB family.

It localises to the cytoplasm. It catalyses the reaction 3-deoxy-alpha-D-manno-oct-2-ulosonate + CTP = CMP-3-deoxy-beta-D-manno-octulosonate + diphosphate. Its pathway is nucleotide-sugar biosynthesis; CMP-3-deoxy-D-manno-octulosonate biosynthesis; CMP-3-deoxy-D-manno-octulosonate from 3-deoxy-D-manno-octulosonate and CTP: step 1/1. It participates in bacterial outer membrane biogenesis; lipopolysaccharide biosynthesis. Its function is as follows. Activates KDO (a required 8-carbon sugar) for incorporation into bacterial lipopolysaccharide in Gram-negative bacteria. The sequence is that of 3-deoxy-manno-octulosonate cytidylyltransferase from Vibrio vulnificus (strain CMCP6).